A 691-amino-acid polypeptide reads, in one-letter code: MMAENNLKMLKIQQCVVANKLPRNRPYVCNICFKHFETPSKLARHYLIHTGQKPFECDVCHKTFRQLVHLERHQLTHSLPFKCSICQRHFKNLKTFVKHQQLHNETYQNNVKQVRRLLEAKQEKSMYGVYNTFTTEERWALHPCSKSDPMYSMKRRKNIHACTICGKMFPSQSKLDRHVLIHTGQRPFKCVLCTKSFRQSTHLKIHQLTHSEERPFQCCFCQKGFKIQSKLLKHKQIHTRNKAFRALLLKKRRTESRPLPNKLNANQGGFENGEIGESEENNPLDVHSIYIVPFQCPKCEKCFESEQILNEHSCFAARSGKIPSRFKRSYNYKTIVKKILAKLKRARSKKLDNFQSEKKVFKKSFLRNCDLISGEQSSEQTQRTFVGSLGKHGTYKTIGNRKKKTLTLPFSWQNMGKNLKGILTTENILSIDNSVNKKDLSICGSSGEEFFNNCEVLQCGFSVPRENIRTRHKICPCDKCEKVFPSISKLKRHYLIHTGQRPFGCNICGKSFRQSAHLKRHEQTHNEKSPYASLCQVEFGNFNNLSNHSGNNVNYNASQQCQAPGVQKYEVSESDQMSGVKAESQDFIPGSTGQPCLPNVLLESEQSNPFCSYSEHQEKNDVFLYRCSVCAKSFRSPSKLERHYLIHAGQKPFECSVCGKTFRQAPHWKRHQLTHFKERPQGKVVALDSVM.

A Glycyl lysine isopeptide (Lys-Gly) (interchain with G-Cter in SUMO2) cross-link involves residue K11. C2H2-type zinc fingers lie at residues 27-49 (YVCN…YLIH), 55-77 (FECD…QLTH), and 81-103 (FKCS…QQLH). Glycyl lysine isopeptide (Lys-Gly) (interchain with G-Cter in SUMO2) cross-links involve residues K112, K121, and K146. 3 consecutive C2H2-type zinc fingers follow at residues 160 to 182 (HACT…VLIH), 188 to 210 (FKCV…QLTH), and 216 to 238 (FQCC…KQIH). The segment at 258–277 (PLPNKLNANQGGFENGEIGE) is disordered. A Glycyl lysine isopeptide (Lys-Gly) (interchain with G-Cter in SUMO2) cross-link involves residue K262. A C2H2-type 7; degenerate zinc finger spans residues 294–318 (FQCPKCEKCFESEQILNEHSCFAAR). Glycyl lysine isopeptide (Lys-Gly) (interchain with G-Cter in SUMO2) cross-links involve residues K420 and K437. 4 consecutive C2H2-type zinc fingers follow at residues 475-497 (CPCD…YLIH), 503-525 (FGCN…EQTH), 625-647 (YRCS…YLIH), and 653-675 (FECS…QLTH). K683 is covalently cross-linked (Glycyl lysine isopeptide (Lys-Gly) (interchain with G-Cter in SUMO2)).

This sequence belongs to the krueppel C2H2-type zinc-finger protein family.

Its subcellular location is the nucleus. May be involved in transcriptional regulation. This chain is Zinc finger protein 770 (ZNF770), found in Homo sapiens (Human).